A 586-amino-acid chain; its full sequence is Asparagine synthetase [glutamine-hydrolyzing] (586 aa).

The For GATase activity role is filled by Cys2. The region spanning Cys2–Gly185 is the Glutamine amidotransferase type-2 domain. Residues Arg50–Ile54, Asn75–Glu77, and Asp98 each bind L-glutamine. Residues Pro194–Pro517 enclose the Asparagine synthetase domain. Residues Leu232, Val268, and Ser342–Gly343 contribute to the ATP site.

This sequence belongs to the asparagine synthetase family.

It catalyses the reaction L-aspartate + L-glutamine + ATP + H2O = L-asparagine + L-glutamate + AMP + diphosphate + H(+). It participates in amino-acid biosynthesis; L-asparagine biosynthesis; L-asparagine from L-aspartate (L-Gln route): step 1/1. This chain is Asparagine synthetase [glutamine-hydrolyzing], found in Brassica oleracea (Wild cabbage).